A 382-amino-acid chain; its full sequence is Mannitol-1-phosphate 5-dehydrogenase (382 aa).

Position 3–14 (3–14 (ALHFGAGNIGRG)) interacts with NAD(+). Lys269 carries the post-translational modification N6-acetyllysine.

This sequence belongs to the mannitol dehydrogenase family.

The enzyme catalyses D-mannitol 1-phosphate + NAD(+) = beta-D-fructose 6-phosphate + NADH + H(+). The chain is Mannitol-1-phosphate 5-dehydrogenase from Escherichia coli O81 (strain ED1a).